Consider the following 370-residue polypeptide: MFQWIYESFGNDYGFLRVFSYVTLRAMMAGLTSMFITFIFGKSLISFLLSLKFRESVRNDGPQSHANKSGTPTMGGLIMILSLTISTLLWGNLSNWNVILLLISAILFAGLGFTDDYMKSVKKIKGGMRARTKFIVTILFAVTITTLYFYYTGKSNVNLQKGIVFSITDLFLPFVKGPVWNLGIFAVPFAIIVLIGSSHAVNLTDGLDGLASGTVVISTATFALIAYVSGTPSAANYLHIPYLPGSHEYSVFLAGLSGALLGFLWFNCHPAQVFMGDTGSLFLGSTLGLVAIMLKKEILLVILGGIFVAEAVSVILQVGSFKLTGKRIFKMAPLHHHFELSGWSEEKVVIRFWIIGIILAIITLSTLKIQ.

A run of 10 helical transmembrane segments spans residues 29–49 (AGLT…SFLL), 70–90 (GTPT…TLLW), 93–113 (LSNW…GLGF), 133–153 (KFIV…YYTG), 177–197 (GPVW…LIGS), 209–229 (GLAS…AYVS), 251–271 (VFLA…CHPA), 273–293 (VFMG…VAIM), 298–318 (ILLV…ILQV), and 349–369 (VIRF…TLKI).

This sequence belongs to the glycosyltransferase 4 family. MraY subfamily. Requires Mg(2+) as cofactor.

The protein localises to the cell inner membrane. It carries out the reaction UDP-N-acetyl-alpha-D-muramoyl-L-alanyl-gamma-D-glutamyl-meso-2,6-diaminopimeloyl-D-alanyl-D-alanine + di-trans,octa-cis-undecaprenyl phosphate = di-trans,octa-cis-undecaprenyl diphospho-N-acetyl-alpha-D-muramoyl-L-alanyl-D-glutamyl-meso-2,6-diaminopimeloyl-D-alanyl-D-alanine + UMP. Its pathway is cell wall biogenesis; peptidoglycan biosynthesis. In terms of biological role, catalyzes the initial step of the lipid cycle reactions in the biosynthesis of the cell wall peptidoglycan: transfers peptidoglycan precursor phospho-MurNAc-pentapeptide from UDP-MurNAc-pentapeptide onto the lipid carrier undecaprenyl phosphate, yielding undecaprenyl-pyrophosphoryl-MurNAc-pentapeptide, known as lipid I. This chain is Phospho-N-acetylmuramoyl-pentapeptide-transferase, found in Leptospira biflexa serovar Patoc (strain Patoc 1 / Ames).